The primary structure comprises 249 residues: AA9 family lytic polysaccharide monooxygenase A (249 aa).

The first 19 residues, 1 to 19, serve as a signal peptide directing secretion; that stretch reads MRGPLCFTLIAIAVTSVVA. Residues histidine 20 and histidine 97 each contribute to the Cu(2+) site. Cysteine 60 and cysteine 183 form a disulfide bridge. Histidine 163 is an O2 binding site. Tyrosine 180 contributes to the Cu(2+) binding site.

The protein belongs to the polysaccharide monooxygenase AA9 family. Cu(2+) serves as cofactor.

It localises to the secreted. It carries out the reaction [(1-&gt;4)-beta-D-glucosyl]n+m + reduced acceptor + O2 = 4-dehydro-beta-D-glucosyl-[(1-&gt;4)-beta-D-glucosyl]n-1 + [(1-&gt;4)-beta-D-glucosyl]m + acceptor + H2O.. Its function is as follows. Lytic polysaccharide monooxygenase (LPMO) that depolymerizes crystalline and amorphous polysaccharides via the oxidation of scissile alpha- or beta-(1-4)-glycosidic bonds, yielding C4 oxidation products. Catalysis by LPMOs requires the reduction of the active-site copper from Cu(II) to Cu(I) by a reducing agent and H(2)O(2) or O(2) as a cosubstrate. Active on cellulose and cello-oligosaccharides, as well as plant cell wall-derived hemicellulosic polysaccharides. Also active on cello-oligosaccharides such as cellohexaose, cellopentaose or cellotetraose. In Armillaria gallica (Bulbous honey fungus), this protein is AA9 family lytic polysaccharide monooxygenase A.